A 134-amino-acid polypeptide reads, in one-letter code: MSWQTYVDDHLMCDIEDHEGHRLTAAAIVGHDGSVWAQSATFPQFKPEEMNGIMTDFNEPGHLAPTGLHLGGTKYMVIQGEAGAVIRGKKGSGGITIKKTGQALVCGIYEEPVTPGQCNMVVERLGDYLLEQGL.

The cysteines at positions 13 and 118 are disulfide-linked. The Involved in PIP2 interaction motif lies at 84–100; it reads AVIRGKKGSGGITIKKT. Residue T114 is modified to Phosphothreonine.

It belongs to the profilin family. Occurs in many kinds of cells as a complex with monomeric actin in a 1:1 ratio. Post-translationally, phosphorylated by MAP kinases.

The protein localises to the cytoplasm. It is found in the cytoskeleton. Binds to actin and affects the structure of the cytoskeleton. At high concentrations, profilin prevents the polymerization of actin, whereas it enhances it at low concentrations. The sequence is that of Profilin-3 from Olea europaea (Common olive).